We begin with the raw amino-acid sequence, 261 residues long: Acyl-[acyl-carrier-protein]--UDP-N-acetylglucosamine O-acyltransferase (261 aa).

It belongs to the transferase hexapeptide repeat family. LpxA subfamily. As to quaternary structure, homotrimer.

It localises to the cytoplasm. It catalyses the reaction a (3R)-hydroxyacyl-[ACP] + UDP-N-acetyl-alpha-D-glucosamine = a UDP-3-O-[(3R)-3-hydroxyacyl]-N-acetyl-alpha-D-glucosamine + holo-[ACP]. The protein operates within glycolipid biosynthesis; lipid IV(A) biosynthesis; lipid IV(A) from (3R)-3-hydroxytetradecanoyl-[acyl-carrier-protein] and UDP-N-acetyl-alpha-D-glucosamine: step 1/6. Involved in the biosynthesis of lipid A, a phosphorylated glycolipid that anchors the lipopolysaccharide to the outer membrane of the cell. This Aquifex aeolicus (strain VF5) protein is Acyl-[acyl-carrier-protein]--UDP-N-acetylglucosamine O-acyltransferase.